The primary structure comprises 359 residues: Probable ribonucleotide transport ATP-binding protein mkl (359 aa).

Residues 28–264 form the ABC transporter domain; it reads IEVNGLTKSF…DEPVVRQFLN (237 aa). ATP is bound at residue 60–67; it reads GPSGTGKS.

Belongs to the ABC transporter superfamily.

In terms of biological role, not known, could be involved in the transport of ribonucleotides. This Mycobacterium bovis (strain ATCC BAA-935 / AF2122/97) protein is Probable ribonucleotide transport ATP-binding protein mkl (mkl).